A 369-amino-acid polypeptide reads, in one-letter code: sn-glycerol-3-phosphate import ATP-binding protein UgpC (369 aa).

Positions 4-235 constitute an ABC transporter domain; it reads LSLRNVQKTY…PASTFVAGFI (232 aa). 37-44 serves as a coordination point for ATP; sequence GPSGCGKS.

This sequence belongs to the ABC transporter superfamily. sn-glycerol-3-phosphate importer (TC 3.A.1.1.3) family. The complex is composed of two ATP-binding proteins (UgpC), two transmembrane proteins (UgpA and UgpE) and a solute-binding protein (UgpB).

Its subcellular location is the cell inner membrane. The enzyme catalyses sn-glycerol 3-phosphate(out) + ATP + H2O = sn-glycerol 3-phosphate(in) + ADP + phosphate + H(+). Functionally, part of the ABC transporter complex UgpBAEC involved in sn-glycerol-3-phosphate (G3P) import. Responsible for energy coupling to the transport system. The polypeptide is sn-glycerol-3-phosphate import ATP-binding protein UgpC (Cupriavidus pinatubonensis (strain JMP 134 / LMG 1197) (Cupriavidus necator (strain JMP 134))).